A 242-amino-acid polypeptide reads, in one-letter code: ATP synthase subunit a (242 aa).

The next 5 membrane-spanning stretches (helical) occupy residues 21 to 41, 79 to 99, 116 to 136, 173 to 193, and 198 to 218; these read LSSI…AIIC, FHFL…LGLP, DATV…FYGV, LYGN…LVTG, and AWGW…SIFI.

This sequence belongs to the ATPase A chain family. As to quaternary structure, F-type ATPases have 2 components, CF(1) - the catalytic core - and CF(0) - the membrane proton channel. CF(1) has five subunits: alpha(3), beta(3), gamma(1), delta(1), epsilon(1). CF(0) has three main subunits: a(1), b(2) and c(9-12). The alpha and beta chains form an alternating ring which encloses part of the gamma chain. CF(1) is attached to CF(0) by a central stalk formed by the gamma and epsilon chains, while a peripheral stalk is formed by the delta and b chains.

The protein resides in the cell membrane. Functionally, key component of the proton channel; it plays a direct role in the translocation of protons across the membrane. This chain is ATP synthase subunit a, found in Staphylococcus saprophyticus subsp. saprophyticus (strain ATCC 15305 / DSM 20229 / NCIMB 8711 / NCTC 7292 / S-41).